A 345-amino-acid chain; its full sequence is Probable aldo-keto reductase 4 (345 aa).

The active-site Proton donor is Tyr-63. His-130 contributes to the substrate binding site. 209-219 is a binding site for NADP(+); sequence SPLGRGFFASG.

Belongs to the aldo/keto reductase family.

The sequence is that of Probable aldo-keto reductase 4 from Arabidopsis thaliana (Mouse-ear cress).